Here is a 51-residue protein sequence, read N- to C-terminus: MQKIDLGNNESLVCGVFPNQDGTFTAMTYTKSKTFKTETGARRWLEKHTVS.

To E.coli YdfA.

This is an uncharacterized protein from Escherichia coli O157:H7.